Here is a 924-residue protein sequence, read N- to C-terminus: WSC domain-containing protein ARB_07867 (924 aa).

The signal sequence occupies residues 1-24; the sequence is MAGILSVVHIIIIFIVRFKSSTDS. The region spanning 62–160 is the WSC 1 domain; it reads TWTYLGCYTD…PGRLNLYQNT (99 aa). The N-linked (GlcNAc...) asparagine glycan is linked to Asn90. The tract at residues 166 to 190 is disordered; that stretch reads DTMTTSAPSTETGSPTTTSVPEPTQ. Low complexity predominate over residues 169-189; sequence TTSAPSTETGSPTTTSVPEPT. Residues 195-289 enclose the WSC 2 domain; that stretch reads GWQYSGCYQD…PSRLSVYSKG (95 aa). N-linked (GlcNAc...) asparagine glycans are attached at residues Asn290, Asn333, Asn387, Asn455, Asn552, Asn758, and Asn833. One can recognise a WSC 3 domain in the interval 307-404; the sequence is GWKYQGCLQD…GNLITYYRWM (98 aa).

It localises to the secreted. The sequence is that of WSC domain-containing protein ARB_07867 from Arthroderma benhamiae (strain ATCC MYA-4681 / CBS 112371) (Trichophyton mentagrophytes).